Consider the following 156-residue polypeptide: Phosphopantetheine adenylyltransferase (156 aa).

Thr-9 provides a ligand contact to substrate. Residues 9–10 (TF) and His-17 each bind ATP. Substrate is bound by residues Lys-41, Leu-73, and Arg-87. ATP contacts are provided by residues 88-90 (GVR), Glu-98, and 123-129 (WAFVSST).

The protein belongs to the bacterial CoaD family. Homohexamer. Requires Mg(2+) as cofactor.

The protein resides in the cytoplasm. The catalysed reaction is (R)-4'-phosphopantetheine + ATP + H(+) = 3'-dephospho-CoA + diphosphate. It functions in the pathway cofactor biosynthesis; coenzyme A biosynthesis; CoA from (R)-pantothenate: step 4/5. Reversibly transfers an adenylyl group from ATP to 4'-phosphopantetheine, yielding dephospho-CoA (dPCoA) and pyrophosphate. In Haemophilus influenzae (strain 86-028NP), this protein is Phosphopantetheine adenylyltransferase.